A 113-amino-acid polypeptide reads, in one-letter code: Hydrogenase maturation factor HypA (113 aa).

Position 2 (H2) interacts with Ni(2+). Positions 73, 76, 89, and 92 each coordinate Zn(2+).

It belongs to the HypA/HybF family.

Involved in the maturation of [NiFe] hydrogenases. Required for nickel insertion into the metal center of the hydrogenase. The chain is Hydrogenase maturation factor HypA from Rhodopseudomonas palustris (strain BisB5).